The sequence spans 795 residues: Phenylalanine--tRNA ligase beta subunit (795 aa).

The tRNA-binding domain occupies 39-148 (AGSFHGVVVG…ADAPIGTDIR (110 aa)). The B5 domain maps to 401-476 (PKRATITLRR…RVYGYNNIPD (76 aa)). Mg(2+) is bound by residues Asp-454, Asp-460, Glu-463, and Glu-464. Residues 701-794 (SRFPANRRDI…LKERFQASLR (94 aa)) enclose the FDX-ACB domain.

Belongs to the phenylalanyl-tRNA synthetase beta subunit family. Type 1 subfamily. Tetramer of two alpha and two beta subunits. Mg(2+) serves as cofactor.

It is found in the cytoplasm. The catalysed reaction is tRNA(Phe) + L-phenylalanine + ATP = L-phenylalanyl-tRNA(Phe) + AMP + diphosphate + H(+). The sequence is that of Phenylalanine--tRNA ligase beta subunit from Shigella dysenteriae serotype 1 (strain Sd197).